The chain runs to 215 residues: AAIFFAGTPILESAMVYPLAICGACILTSIAGTFFVKLGTNNSIMGALYKGLIATGVFSVAGLAVATYATVGWGTIGTVAGMEITGTNLFFCGLVGLVVTALIVVITEYYTGTNKRPVNSIAQASVTGHGTNVIQGLAVSLESTALPAIVIVGGIIGTYQLGGLFGTGIAVTAMLGLAGMIVALDAFGPVTDNAGGIAEMAGLDPDVRKRPTRWM.

5 consecutive transmembrane segments (helical) span residues Val-16–Val-36, Gly-51–Val-71, Gly-86–Ile-106, Gly-136–Ile-156, and Leu-164–Leu-184.

This sequence belongs to the H(+)-translocating pyrophosphatase (TC 3.A.10) family. Homodimer. Mg(2+) is required as a cofactor.

Its subcellular location is the cell inner membrane. It catalyses the reaction diphosphate + H2O + H(+)(in) = 2 phosphate + 2 H(+)(out). Functionally, proton pump that utilizes the energy of pyrophosphate hydrolysis as the driving force for proton movement across the membrane. Generates a proton motive force. This is Pyrophosphate-energized proton pump 2 (hppA2) from Rhizobium leguminosarum bv. trifolii.